The following is a 485-amino-acid chain: DNA polymerase subunit gamma-2 (485 aa).

The segment at 28-65 (GQPELLTERSSPKGGHVKSHAELEGNGEHPEAPGSGEG) is disordered. Position 38 is a phosphoserine (Ser-38). Residues 46–58 (SHAELEGNGEHPE) show a composition bias toward basic and acidic residues.

Heterotrimer composed of a catalytic subunit and a homodimer of accessory subunits (POLG:POLG2).

Its subcellular location is the mitochondrion. It localises to the mitochondrion matrix. The protein resides in the mitochondrion nucleoid. Functionally, accessory subunit of DNA polymerase gamma solely responsible for replication of mitochondrial DNA (mtDNA). Acts as an allosteric regulator of the holoenzyme activities. Enhances the polymerase activity and the processivity of POLG by increasing its interactions with the DNA template. Suppresses POLG exonucleolytic proofreading especially toward homopolymeric templates bearing mismatched termini. Binds to single-stranded DNA. This Homo sapiens (Human) protein is DNA polymerase subunit gamma-2.